The following is a 51-amino-acid chain: Lantibiotic streptococcin A-FF22 (51 aa).

The propeptide occupies 1 to 25 (MEKNNEVINSIQEVSLEELDQIIGA). Cross-links (beta-methyllanthionine (Thr-Cys)) lie at residues 33 to 38 (TISHEC) and 42 to 50 (TWAFLATCC). Residues 35–49 (SHECHLNTWAFLATC) constitute a cross-link (lanthionine (Ser-Cys)). Thr48 bears the 2,3-didehydrobutyrine mark.

Belongs to the type A lantibiotic family. In terms of processing, maturation of lantibiotics involves the enzymatic conversion of Thr, and Ser into dehydrated AA and the formation of thioether bonds with cysteine. This is followed by membrane translocation and cleavage of the modified precursor.

It is found in the secreted. Its subcellular location is the cell surface. Its function is as follows. Lanthionine-containing peptide antibiotic (lantibiotic) active on certain Gram-positive bacteria. The bactericidal activity of lantibiotics is based on depolarization of energized bacterial cytoplasmic membranes, initiated by the formation of aqueous transmembrane pores. The polypeptide is Lantibiotic streptococcin A-FF22 (scnA) (Streptococcus pyogenes).